A 286-amino-acid polypeptide reads, in one-letter code: NADPH-dependent 7-cyano-7-deazaguanine reductase (286 aa).

Residue 92–94 coordinates substrate; sequence IES. Position 94–95 (94–95) interacts with NADPH; that stretch reads SK. The active-site Thioimide intermediate is the Cys-194. The active-site Proton donor is Asp-201. Position 233–234 (233–234) interacts with substrate; sequence HE. 262-263 is a binding site for NADPH; that stretch reads RG.

Belongs to the GTP cyclohydrolase I family. QueF type 2 subfamily. In terms of assembly, homodimer.

Its subcellular location is the cytoplasm. It catalyses the reaction 7-aminomethyl-7-carbaguanine + 2 NADP(+) = 7-cyano-7-deazaguanine + 2 NADPH + 3 H(+). It functions in the pathway tRNA modification; tRNA-queuosine biosynthesis. Functionally, catalyzes the NADPH-dependent reduction of 7-cyano-7-deazaguanine (preQ0) to 7-aminomethyl-7-deazaguanine (preQ1). This Shewanella sp. (strain MR-7) protein is NADPH-dependent 7-cyano-7-deazaguanine reductase.